A 519-amino-acid polypeptide reads, in one-letter code: ATP synthase subunit alpha (519 aa).

Residue 174 to 181 participates in ATP binding; that stretch reads GDRQTGKT.

This sequence belongs to the ATPase alpha/beta chains family. In terms of assembly, F-type ATPases have 2 components, CF(1) - the catalytic core - and CF(0) - the membrane proton channel. CF(1) has five subunits: alpha(3), beta(3), gamma(1), delta(1), epsilon(1). CF(0) has three main subunits: a(1), b(2) and c(9-12). The alpha and beta chains form an alternating ring which encloses part of the gamma chain. CF(1) is attached to CF(0) by a central stalk formed by the gamma and epsilon chains, while a peripheral stalk is formed by the delta and b chains.

The protein resides in the cell inner membrane. The enzyme catalyses ATP + H2O + 4 H(+)(in) = ADP + phosphate + 5 H(+)(out). In terms of biological role, produces ATP from ADP in the presence of a proton gradient across the membrane. The alpha chain is a regulatory subunit. This chain is ATP synthase subunit alpha, found in Acidovorax ebreus (strain TPSY) (Diaphorobacter sp. (strain TPSY)).